Consider the following 191-residue polypeptide: Fe/S biogenesis protein NfuA (191 aa).

[4Fe-4S] cluster contacts are provided by Cys149 and Cys152.

This sequence belongs to the NfuA family. As to quaternary structure, homodimer. Requires [4Fe-4S] cluster as cofactor.

Involved in iron-sulfur cluster biogenesis. Binds a 4Fe-4S cluster, can transfer this cluster to apoproteins, and thereby intervenes in the maturation of Fe/S proteins. Could also act as a scaffold/chaperone for damaged Fe/S proteins. The protein is Fe/S biogenesis protein NfuA of Buchnera aphidicola subsp. Baizongia pistaciae (strain Bp).